The primary structure comprises 138 residues: ATP synthase epsilon chain (138 aa).

Belongs to the ATPase epsilon chain family. F-type ATPases have 2 components, CF(1) - the catalytic core - and CF(0) - the membrane proton channel. CF(1) has five subunits: alpha(3), beta(3), gamma(1), delta(1), epsilon(1). CF(0) has three main subunits: a, b and c.

It localises to the cell inner membrane. Produces ATP from ADP in the presence of a proton gradient across the membrane. This Endomicrobium trichonymphae protein is ATP synthase epsilon chain.